The chain runs to 227 residues: uncharacterized protein (227 aa).

3 helical membrane passes run 109–128 (MCNV…FAGI), 173–192 (AILL…ILLT), and 199–221 (ALRV…VMMG).

Its subcellular location is the cell membrane. This is an uncharacterized protein from Archaeoglobus fulgidus (strain ATCC 49558 / DSM 4304 / JCM 9628 / NBRC 100126 / VC-16).